The following is a 262-amino-acid chain: Acyl-[acyl-carrier-protein]--UDP-N-acetylglucosamine O-acyltransferase (262 aa).

It belongs to the transferase hexapeptide repeat family. LpxA subfamily. In terms of assembly, homotrimer.

The protein localises to the cytoplasm. It carries out the reaction a (3R)-hydroxyacyl-[ACP] + UDP-N-acetyl-alpha-D-glucosamine = a UDP-3-O-[(3R)-3-hydroxyacyl]-N-acetyl-alpha-D-glucosamine + holo-[ACP]. It participates in glycolipid biosynthesis; lipid IV(A) biosynthesis; lipid IV(A) from (3R)-3-hydroxytetradecanoyl-[acyl-carrier-protein] and UDP-N-acetyl-alpha-D-glucosamine: step 1/6. Its function is as follows. Involved in the biosynthesis of lipid A, a phosphorylated glycolipid that anchors the lipopolysaccharide to the outer membrane of the cell. In Burkholderia ambifaria (strain MC40-6), this protein is Acyl-[acyl-carrier-protein]--UDP-N-acetylglucosamine O-acyltransferase.